A 123-amino-acid chain; its full sequence is PTS system glucitol/sorbitol-specific EIIA component (123 aa).

In terms of domain architecture, PTS EIIA type-5 spans 1 to 116 (MTVIYQTTIT…PDDIAPGSVL (116 aa)). Histidine 43 acts as the Tele-phosphohistidine intermediate in catalysis. The residue at position 43 (histidine 43) is a Phosphohistidine; by HPr.

The protein localises to the cytoplasm. In terms of biological role, the phosphoenolpyruvate-dependent sugar phosphotransferase system (sugar PTS), a major carbohydrate active transport system, catalyzes the phosphorylation of incoming sugar substrates concomitantly with their translocation across the cell membrane. The enzyme II complex composed of SrlA, SrlB and SrlE is involved in glucitol/sorbitol transport. The sequence is that of PTS system glucitol/sorbitol-specific EIIA component (srlB) from Shigella flexneri.